The following is a 269-amino-acid chain: JmjC domain-containing protein 8 (269 aa).

A signal peptide spans 1 to 24 (MAAAGRRGLLLLFVLWMMVTVILP). N-linked (GlcNAc...) asparagine glycosylation is found at asparagine 135, asparagine 145, and asparagine 214. The region spanning 136–269 (DTLYFFGDNN…TSVFISTFLG (134 aa)) is the JmjC domain.

In terms of assembly, oligomer. Dimer. Interacts with PKM; regulates angiogenesis and metabolism. N-glycosylated.

It localises to the endoplasmic reticulum lumen. The protein localises to the cytoplasm. In terms of biological role, functions as a positive regulator of TNF-induced NF-kappaB signaling. Regulates angiogenesis and cellular metabolism through interaction with PKM. This chain is JmjC domain-containing protein 8, found in Mus musculus (Mouse).